The following is a 91-amino-acid chain: Cell division topological specificity factor (91 aa).

This sequence belongs to the MinE family.

In terms of biological role, prevents the cell division inhibition by proteins MinC and MinD at internal division sites while permitting inhibition at polar sites. This ensures cell division at the proper site by restricting the formation of a division septum at the midpoint of the long axis of the cell. In Bradyrhizobium sp. (strain BTAi1 / ATCC BAA-1182), this protein is Cell division topological specificity factor.